Reading from the N-terminus, the 1302-residue chain is RNA-directed RNA polymerase (1302 aa).

One can recognise a RdRp catalytic domain in the interval 562-823 (VIVGDLEATG…QTHAKQGCYV (262 aa)).

The protein belongs to the reoviridae RNA-directed RNA polymerase family.

The catalysed reaction is RNA(n) + a ribonucleoside 5'-triphosphate = RNA(n+1) + diphosphate. This is RNA-directed RNA polymerase (Segment-1) from Antilocapra americana (Pronghorn).